The following is a 274-amino-acid chain: Large ribosomal subunit protein uL2cz (274 aa).

Disordered regions lie at residues 1-25 (MAIHLYKTSTPSTRNGTVDSQVKSN) and 224-274 (NPVD…RRSK). Residues 7–25 (KTSTPSTRNGTVDSQVKSN) show a composition bias toward polar residues.

It belongs to the universal ribosomal protein uL2 family. As to quaternary structure, part of the 50S ribosomal subunit.

The protein localises to the plastid. The protein resides in the chloroplast. The polypeptide is Large ribosomal subunit protein uL2cz (rpl2-A) (Coffea arabica (Arabian coffee)).